Consider the following 356-residue polypeptide: Alanine racemase, catabolic (356 aa).

The active-site Proton acceptor; specific for D-alanine is the Lys35. The residue at position 35 (Lys35) is an N6-(pyridoxal phosphate)lysine. A substrate-binding site is contributed by Arg130. Tyr253 (proton acceptor; specific for L-alanine) is an active-site residue. Met301 serves as a coordination point for substrate.

This sequence belongs to the alanine racemase family. Pyridoxal 5'-phosphate serves as cofactor.

The catalysed reaction is L-alanine = D-alanine. Its function is as follows. Isomerizes L-alanine to D-alanine which is then oxidized to pyruvate by DadA. In Escherichia coli (strain K12), this protein is Alanine racemase, catabolic (dadX).